Reading from the N-terminus, the 627-residue chain is Protein fem-1 homolog B (627 aa).

ANK repeat units follow at residues 45–74, 87–116, 120–149, and 153–182; these read QRSTPLIIAARNGHAKVVRLLLEHYRVQTQ, DGATALWCAAGAGHFEVVKLLVSHGANVNH, TNSTPLRAACFDGRLDIVKYLVENNANISI, and YDNTCLMIAAYKGHTDVVRYLLEQRADPNA. The Zn(2+) site is built by H185, C186, and H218. ANK repeat units follow at residues 186–215 and 218–248; these read CGATALHFAAEAGHIDIVKELIKWRAAIVV and HGMTPLKVAAESCKADVVELLLSHADCDRRS. Residues 344 to 377 form a TPR repeat; sequence SHPIIYRGAVYADNMEFEQCIKLWLHALHLRQKG. ANK repeat units lie at residues 483–527 and 531–568; these read EGFS…EVNA and EGNSALHIIVQYNRPISDFLTLHSIIISLVEAGAHTDM.

The protein belongs to the fem-1 family. Component of a CRL2 E3 ubiquitin-protein ligase complex, also named ECS (Elongin BC-CUL2/5-SOCS-box protein) complex, composed of CUL2, Elongin BC (ELOB and ELOC), RBX1 and substrate-specific adapter FEM1B. Homooligomer. Interacts with PPM1F and PHTF1. Interacts with the death domain of FAS/TNFRSF6 and TNFRSF1A. Interacts with CHEK1. Interacts with NKX3-1. In terms of tissue distribution, expressed in pancreatic islets, within both beta cells and non-beta cells (at protein level). Highly expressed in adult testis; expressed in all types of spermatogonia. Also expressed in the prostate of neonatal mice.

It is found in the cytoplasm. The protein localises to the nucleus. The protein operates within protein modification; protein ubiquitination. Its activity is regulated as follows. Activity of the CRL2(FEM1B) complex toward FNIP1 is inhibited by BEX family proteins (BEX1, BEX2, BEX3 and/or BEX4) in absence of reductive stress. Mechanistically, BEX proteins act as pseudosubstrate inhibitors that associate with FEM1B via zinc in absence of reductive stress, thereby preventing association between FEM1B and FNIP1. Substrate-recognition component of a Cul2-RING (CRL2) E3 ubiquitin-protein ligase complex of the DesCEND (destruction via C-end degrons) pathway, which recognizes a C-degron located at the extreme C terminus of target proteins, leading to their ubiquitination and degradation. The C-degron recognized by the DesCEND pathway is usually a motif of less than ten residues and can be present in full-length proteins, truncated proteins or proteolytically cleaved forms. The CRL2(FEM1B) complex specifically recognizes proteins ending with -Gly-Leu-Asp-Arg, such as CDK5R1, leading to their ubiquitination and degradation. Also acts as a regulator of the reductive stress response by mediating ubiquitination of reduced FNIP1: in response to reductive stress, the CRL2(FEM1B) complex specifically recognizes a conserved Cys degron in FNIP1 when this degron is reduced, leading to FNIP1 degradation and subsequent activation of mitochondria to recalibrate reactive oxygen species (ROS). Mechanistically, recognizes and binds reduced FNIP1 through two interface zinc ions, which act as a molecular glue that recruit reduced FNIP1 to FEM1B. Promotes ubiquitination of GLI1, suppressing GLI1 transcriptional activator activity. Promotes ubiquitination and degradation of ANKRD37. Promotes ubiquitination and degradation of SLBP. Involved in apoptosis by acting as a death receptor-associated protein that mediates apoptosis. Also involved in glucose homeostasis in pancreatic islet. May also act as an adapter/mediator in replication stress-induced signaling that leads to the activation of CHEK1. This Mus musculus (Mouse) protein is Protein fem-1 homolog B.